A 224-amino-acid polypeptide reads, in one-letter code: MNQKKAVILLSGGLDSATVVAMAKADGYACYTMSFDYGQRHRAELQAAERVARQLGAIEHKVIGLDLNGMGGSALTDDSIAVPEAPSQGIPVTYVPARNTVFLSLALGWAEVLEARDIFIGVNAVDYSGYPDCRPEFVEAFERMANLATKAGVEGNGFRIQAPLQYLSKAQIIQAGVARGVDYGLTVSCYQADDQGRACGKCDSCRLRADGFAAAGIPDPTPYF.

ATP is bound at residue 10–20 (LSGGLDSATVV). Residues Cys189, Cys199, Cys202, and Cys205 each contribute to the Zn(2+) site.

The protein belongs to the QueC family. Zn(2+) is required as a cofactor.

It catalyses the reaction 7-carboxy-7-deazaguanine + NH4(+) + ATP = 7-cyano-7-deazaguanine + ADP + phosphate + H2O + H(+). It functions in the pathway purine metabolism; 7-cyano-7-deazaguanine biosynthesis. Functionally, catalyzes the ATP-dependent conversion of 7-carboxy-7-deazaguanine (CDG) to 7-cyano-7-deazaguanine (preQ(0)). This chain is 7-cyano-7-deazaguanine synthase, found in Pseudomonas paraeruginosa (strain DSM 24068 / PA7) (Pseudomonas aeruginosa (strain PA7)).